Consider the following 341-residue polypeptide: Eukaryotic translation initiation factor 3 subunit I (341 aa).

WD repeat units follow at residues 8–49 (GHER…GTYR), 50–91 (GHQG…KTWD), 135–184 (QSDE…LLYN), 189–228 (ELNQ…VLKS), and 286–325 (GHFG…YDFL).

Belongs to the eIF-3 subunit I family. In terms of assembly, component of the eukaryotic translation initiation factor 3 (eIF-3) complex.

The protein localises to the cytoplasm. Functionally, component of the eukaryotic translation initiation factor 3 (eIF-3) complex, which is involved in protein synthesis of a specialized repertoire of mRNAs and, together with other initiation factors, stimulates binding of mRNA and methionyl-tRNAi to the 40S ribosome. The eIF-3 complex specifically targets and initiates translation of a subset of mRNAs involved in cell proliferation. This is Eukaryotic translation initiation factor 3 subunit I from Chaetomium globosum (strain ATCC 6205 / CBS 148.51 / DSM 1962 / NBRC 6347 / NRRL 1970) (Soil fungus).